We begin with the raw amino-acid sequence, 447 residues long: Polyamine export protein (447 aa).

Residues 1-4 are Cytoplasmic-facing; sequence MLNS. The CNNM transmembrane domain maps to 1–197; the sequence is MLNSIFIIFC…ALAGVLRKQE (197 aa). A helical membrane pass occupies residues 5 to 25; that stretch reads IFIIFCLIAVSAFFSISEISL. Topologically, residues 26–54 are periplasmic; sequence AASRKIKLKLLADEGSINAQRVLKMQENP. The chain crosses the membrane as a helical span at residues 55 to 75; sequence GMFFTVVQIGLNAVAILGGIV. At 76 to 99 the chain is on the cytoplasmic side; it reads GDAAFSPAFSALFSHYMSPELSEQ. The helical transmembrane segment at 100-120 threads the bilayer; it reads LSFILSFSLVTGLFILFADLT. Residues 121-141 lie on the Periplasmic side of the membrane; the sequence is PKRIGMIAPEAVALRIINPMR. The helical transmembrane segment at 142 to 162 threads the bilayer; it reads FCLFVFRPLVWLFNGMANNIF. Over 163 to 447 the chain is Cytoplasmic; it reads RLFKIPMVRK…DAQGKEDSAA (285 aa). CBS domains follow at residues 216-275 and 282-343; these read MTSR…NQSM and QIRN…GLEE.

This sequence belongs to the UPF0053 family. PaeA subfamily.

It is found in the cell inner membrane. Involved in cadaverine and putrescine tolerance in stationary phase. May facilitate the efflux of both cadaverine and putrescine from the cytoplasm, reducing potentially toxic levels under certain stress conditions. The sequence is that of Polyamine export protein from Salmonella typhimurium (strain 14028s / SGSC 2262).